The sequence spans 236 residues: SPbeta prophage-derived uncharacterized protein YomV (236 aa).

This Bacillus subtilis (strain 168) protein is SPbeta prophage-derived uncharacterized protein YomV (yomV).